The chain runs to 370 residues: Putative F-box protein At1g47390 (370 aa).

Residues 1-47 enclose the F-box domain; that stretch reads MAPEEKLPCELIEEILSRVPPESLVRFRTVSKKWNALFDDKMFINNH.

This is Putative F-box protein At1g47390 from Arabidopsis thaliana (Mouse-ear cress).